The primary structure comprises 347 residues: RNA 3'-terminal phosphate cyclase (347 aa).

Residues Gln109 and 290–294 (YLADQ) each bind ATP. His315 serves as the catalytic Tele-AMP-histidine intermediate.

This sequence belongs to the RNA 3'-terminal cyclase family. Type 1 subfamily.

It localises to the cytoplasm. The enzyme catalyses a 3'-end 3'-phospho-ribonucleotide-RNA + ATP = a 3'-end 2',3'-cyclophospho-ribonucleotide-RNA + AMP + diphosphate. Functionally, catalyzes the conversion of 3'-phosphate to a 2',3'-cyclic phosphodiester at the end of RNA. The mechanism of action of the enzyme occurs in 3 steps: (A) adenylation of the enzyme by ATP; (B) transfer of adenylate to an RNA-N3'P to produce RNA-N3'PP5'A; (C) and attack of the adjacent 2'-hydroxyl on the 3'-phosphorus in the diester linkage to produce the cyclic end product. The biological role of this enzyme is unknown but it is likely to function in some aspects of cellular RNA processing. This chain is RNA 3'-terminal phosphate cyclase, found in Ralstonia nicotianae (strain ATCC BAA-1114 / GMI1000) (Ralstonia solanacearum).